The primary structure comprises 362 residues: 3-dehydroquinate synthase (362 aa).

Residues 72 to 77 (DGEQYK), 106 to 110 (GVVGD), 130 to 131 (TT), K143, K152, and 170 to 173 (CLKT) each bind NAD(+). E185, H248, and H265 together coordinate Zn(2+).

Belongs to the sugar phosphate cyclases superfamily. Dehydroquinate synthase family. It depends on Co(2+) as a cofactor. Zn(2+) serves as cofactor. Requires NAD(+) as cofactor.

The protein resides in the cytoplasm. The enzyme catalyses 7-phospho-2-dehydro-3-deoxy-D-arabino-heptonate = 3-dehydroquinate + phosphate. Its pathway is metabolic intermediate biosynthesis; chorismate biosynthesis; chorismate from D-erythrose 4-phosphate and phosphoenolpyruvate: step 2/7. Functionally, catalyzes the conversion of 3-deoxy-D-arabino-heptulosonate 7-phosphate (DAHP) to dehydroquinate (DHQ). This is 3-dehydroquinate synthase from Aliivibrio salmonicida (strain LFI1238) (Vibrio salmonicida (strain LFI1238)).